A 268-amino-acid polypeptide reads, in one-letter code: Probable intron-encoded DNA endonuclease 1 (268 aa).

This sequence belongs to the LAGLIDADG endonuclease family.

It is found in the mitochondrion. In terms of biological role, mitochondrial DNA endonuclease involved in intron homing. The sequence is that of Probable intron-encoded DNA endonuclease 1 (hegI1) from Mycosarcoma maydis (Corn smut fungus).